A 197-amino-acid polypeptide reads, in one-letter code: Fucoxanthin-chlorophyll a-c binding protein D, chloroplastic (197 aa).

The N-terminal 31 residues, 1-31, are a transit peptide targeting the chloroplast; it reads MKTAVIASLIAGAAAFAPAKNAARTSVATNM. The next 3 membrane-spanning stretches (helical) occupy residues 73 to 94, 114 to 133, and 174 to 196; these read ISML…PGTI, PAGG…SSVM, and GRAA…SLLP.

This sequence belongs to the fucoxanthin chlorophyll protein family. As to quaternary structure, the LHC complex of chromophytic algae is composed of fucoxanthin, chlorophyll A and C bound non-covalently by fucoxanthin chlorophyll proteins (FCPs). The ratio of the pigments in LHC; fucoxanthin: chlorophyll C: chlorophyll A; (0.6-1): (0.1-0.3): (1).

The protein localises to the plastid. It is found in the chloroplast thylakoid membrane. Its function is as follows. The light-harvesting complex (LHC) functions as a light receptor, it captures and delivers excitation energy to photosystems with which it is closely associated. Energy is transferred from the carotenoid and chlorophyll C (or B) to chlorophyll A and the photosynthetic reaction centers where it is used to synthesize ATP and reducing power. The polypeptide is Fucoxanthin-chlorophyll a-c binding protein D, chloroplastic (FCPD) (Phaeodactylum tricornutum (Diatom)).